Reading from the N-terminus, the 201-residue chain is Lipopolysaccharide core heptose(II)-phosphate phosphatase (201 aa).

Positions 1-35 are cleaved as a signal peptide; that stretch reads MLAFTLRFIKNKRYLATLAGALVIIAGLTSQHAWS.

This sequence belongs to the phosphoglycerate mutase family. Ais subfamily.

The protein resides in the periplasm. Its pathway is bacterial outer membrane biogenesis; lipopolysaccharide metabolism. Its function is as follows. Catalyzes the dephosphorylation of heptose(II) of the outer membrane lipopolysaccharide core. This Salmonella schwarzengrund (strain CVM19633) protein is Lipopolysaccharide core heptose(II)-phosphate phosphatase.